A 411-amino-acid polypeptide reads, in one-letter code: Arginine deiminase (411 aa).

C401 (amidino-cysteine intermediate) is an active-site residue.

Belongs to the arginine deiminase family. Glycosylated.

The protein localises to the cytoplasm. The catalysed reaction is L-arginine + H2O = L-citrulline + NH4(+). The protein operates within amino-acid degradation; L-arginine degradation via ADI pathway; carbamoyl phosphate from L-arginine: step 1/2. The sequence is that of Arginine deiminase from Streptococcus pyogenes serotype M3 (strain ATCC BAA-595 / MGAS315).